A 557-amino-acid polypeptide reads, in one-letter code: Nucleoporin AMO1 (557 aa).

A C3H1-type zinc finger spans residues 1–25 (MTVCRFWQQGYCRNGNACKFEHPPK). Residues 114 to 141 (QGALNEIQAAYQAAQQQIQNTLQNIPAA) adopt a coiled-coil conformation. Residues 161 to 297 (ESSKGSSTGG…SALGPKPGAF (137 aa)) are disordered. 10 SXFG repeats span residues 171–174 (SVFG), 200–203 (SAFG), 213–216 (SAFG), 228–231 (SAFG), 240–243 (SAFG), 249–252 (STFG), 262–265 (SAFG), 282–285 (SAFG), 303–306 (SAFG), and 314–317 (SPFG). Polar residues predominate over residues 195-215 (STPSTSAFGQPSPLGQKSSAF). Over residues 243 to 253 (GSPQTGSTFGQ) the composition is skewed to polar residues. The segment at 315-463 (PFGAAAQATQ…DLLSYATKNP (149 aa)) is disordered. Composition is skewed to polar residues over residues 321 to 338 (QATQPANPFGQPSQQAAN) and 351 to 366 (GQPSTTTAQNPFGQPS). SXFG repeat units lie at residues 348–351 (SAFG), 370–373 (SAFG), 387–390 (SLFG), and 407–410 (SAFG). Positions 367–385 (TQSSAFGQQQPQQAGTFGS) are enriched in low complexity. Residues 388 to 429 (LFGQQQQQPSNVFGQPSTTSAFGSQAATSGFSQLGNATSTIG) show a composition bias toward polar residues. Residues 430–443 (ASPAGAQAPASKSP) show a composition bias toward low complexity.

As to quaternary structure, the nuclear pore complex (NPC) constitutes the exclusive means of nucleocytoplasmic transport. NPCs allow the passive diffusion of ions and small molecules and the active, nuclear transport receptor-mediated bidirectional transport of macromolecules such as proteins, RNAs, ribonucleoparticles (RNPs), and ribosomal subunits across the nuclear envelope. The 55-60 MDa NPC is composed of at least 28 different subunits: AMO1, ELYS, GLE1, GLE2, MLP1, NDC1, NIC96, NSP1, NUP133, NUP145, NUP152, NUP159, NUP170, NUP188, NUP192, NUP37, NUP49, NUP53, NUP56, NUP57, NUP82, NUP84, NUP85, POM152, POM33, POM34, SEC13 and SEH1. Due to its 8-fold rotational symmetry, all subunits are present with 8 copies or multiples thereof.

It localises to the nucleus. Its subcellular location is the nuclear pore complex. The protein localises to the nucleus membrane. Functionally, functions as a component of the nuclear pore complex (NPC). NPC components, collectively referred to as nucleoporins (NUPs), can play the role of both NPC structural components and of docking or interaction partners for transiently associated nuclear transport factors. Active directional transport is assured by both, a Phe-Gly (FG) repeat affinity gradient for these transport factors across the NPC and a transport cofactor concentration gradient across the nuclear envelope (GSP1 and GSP2 GTPases associated predominantly with GTP in the nucleus, with GDP in the cytoplasm). AMO1 is specifically important for nuclear protein and mRNA export. The polypeptide is Nucleoporin AMO1 (AMO1) (Chaetomium thermophilum (strain DSM 1495 / CBS 144.50 / IMI 039719) (Thermochaetoides thermophila)).